Consider the following 78-residue polypeptide: RNA-binding protein Hfq (78 aa).

The Sm domain occupies 10-70; sequence DLFLNSVRKQ…ISTIMPSQPV (61 aa).

It belongs to the Hfq family. As to quaternary structure, homohexamer.

Functionally, RNA chaperone that binds small regulatory RNA (sRNAs) and mRNAs to facilitate mRNA translational regulation in response to envelope stress, environmental stress and changes in metabolite concentrations. Also binds with high specificity to tRNAs. This is RNA-binding protein Hfq from Brucella abortus (strain S19).